Here is an 87-residue protein sequence, read N- to C-terminus: MGSRLPPAALTLKQFLVRQQVLGLYRRIVRAVRQIPGAADRQYLQDWARDEFRRNKGASEEIAIRMMISHGQRQLQELERALQLAKS.

The transit peptide at 1 to 19 (MGSRLPPAALTLKQFLVRQ) directs the protein to the mitochondrion.

It belongs to the complex I LYR family.

It is found in the mitochondrion. Functionally, involved in efficient integration of the N-module into mitochondrial respiratory chain complex I. The protein is LYR motif-containing protein 2 (lyrm2) of Xenopus laevis (African clawed frog).